Consider the following 808-residue polypeptide: LisH domain-containing protein ARMC9 (808 aa).

The LisH domain maps to 7-39 (YEADLLGLVKEFLNFGEFQETLETFTKECKTKG). Residues 196-230 (ITLYKESLHNNQELLQQLQQQLMETEHKARTYKKC) adopt a coiled-coil conformation. Disordered regions lie at residues 576–599 (FDES…DALE), 650–709 (PLQR…DYCV), and 742–808 (GMEK…SYRK). Acidic residues predominate over residues 579–599 (SIESDDEEEEKDDEEDEDALE). Polar residues-rich tracts occupy residues 655–668 (VTPS…TVRK), 677–709 (TNTF…DYCV), and 775–784 (IAPQFSQSGP). Residues 785 to 808 (QQTSYSSSAGSSTRSRQSTQSYRK) show a composition bias toward low complexity.

The protein localises to the cytoplasm. It is found in the cytoskeleton. The protein resides in the cilium basal body. Its subcellular location is the cell projection. It localises to the cilium. The protein localises to the microtubule organizing center. It is found in the centrosome. The protein resides in the centriole. Its function is as follows. Involved in ciliogenesis. It is required for appropriate acetylation and polyglutamylation of ciliary microtubules, and regulation of cilium length. Acts as a positive regulator of hedgehog (Hh)signaling. This Xenopus tropicalis (Western clawed frog) protein is LisH domain-containing protein ARMC9 (armc9).